The chain runs to 134 residues: Large ribosomal subunit protein eL32 (134 aa).

Belongs to the eukaryotic ribosomal protein eL32 family.

The protein is Large ribosomal subunit protein eL32 (RpL32) of Drosophila acanthoptera (Fruit fly).